Consider the following 200-residue polypeptide: ATP-dependent Clp protease proteolytic subunit 2 (200 aa).

Ser101 functions as the Nucleophile in the catalytic mechanism. His126 is a catalytic residue.

This sequence belongs to the peptidase S14 family. As to quaternary structure, fourteen ClpP subunits assemble into 2 heptameric rings which stack back to back to give a disk-like structure with a central cavity, resembling the structure of eukaryotic proteasomes.

It is found in the cytoplasm. It catalyses the reaction Hydrolysis of proteins to small peptides in the presence of ATP and magnesium. alpha-casein is the usual test substrate. In the absence of ATP, only oligopeptides shorter than five residues are hydrolyzed (such as succinyl-Leu-Tyr-|-NHMec, and Leu-Tyr-Leu-|-Tyr-Trp, in which cleavage of the -Tyr-|-Leu- and -Tyr-|-Trp bonds also occurs).. In terms of biological role, cleaves peptides in various proteins in a process that requires ATP hydrolysis. Has a chymotrypsin-like activity. Plays a major role in the degradation of misfolded proteins. The sequence is that of ATP-dependent Clp protease proteolytic subunit 2 from Prochlorococcus marinus (strain MIT 9313).